An 853-amino-acid chain; its full sequence is Replication protein A 70 kDa DNA-binding subunit C (853 aa).

The tract at residues 118–282 (PKEPGHSSIN…QSAYQPQQPP (165 aa)) is disordered. Polar residues-rich tracts occupy residues 124–144 (SSIN…SEQQ), 159–173 (SANS…NSSD), 180–194 (SANS…SSSD), 201–211 (SANSPQRQVVH), 222–249 (PQVS…SSNA), and 263–278 (TATT…AYQP). The segment at residues 312–399 (WTIKVRVTSK…NDYEIHLDSA (88 aa)) is a DNA-binding region (OB). The C4-type zinc finger occupies 602 to 628 (CPIMNGDRPCSKKVTNNGDGTWRCEKC).

The protein belongs to the replication factor A protein 1 family. As to quaternary structure, heterotrimer of RPA1, RPA2 and RPA3 (canonical replication protein A complex).

It localises to the nucleus. In terms of biological role, component of the replication protein A complex (RPA) required for DNA recombination, repair and replication. The activity of RPA is mediated by single-stranded DNA binding and protein interactions. Probably involved in repair of double-strand DNA breaks (DSBs) induced by genotoxic stresses. This Arabidopsis thaliana (Mouse-ear cress) protein is Replication protein A 70 kDa DNA-binding subunit C (RPA1C).